Here is a 333-residue protein sequence, read N- to C-terminus: L-lactate dehydrogenase B chain (333 aa).

NAD(+) contacts are provided by residues 29–57 (GQVGMACAISVLEKGLCDELALVDVLEDK) and arginine 99. The substrate site is built by arginine 106, asparagine 138, and arginine 169. Asparagine 138 serves as a coordination point for NAD(+). The active-site Proton acceptor is the histidine 193. Position 248 (threonine 248) interacts with substrate.

The protein belongs to the LDH/MDH superfamily. LDH family. As to quaternary structure, homotetramer.

It localises to the cytoplasm. The catalysed reaction is (S)-lactate + NAD(+) = pyruvate + NADH + H(+). It participates in fermentation; pyruvate fermentation to lactate; (S)-lactate from pyruvate: step 1/1. Its function is as follows. Interconverts simultaneously and stereospecifically pyruvate and lactate with concomitant interconversion of NADH and NAD(+). This chain is L-lactate dehydrogenase B chain (LDHB), found in Sceloporus woodi (Florida scrub lizard).